We begin with the raw amino-acid sequence, 120 residues long: Large ribosomal subunit protein uL18 (120 aa).

It belongs to the universal ribosomal protein uL18 family. In terms of assembly, part of the 50S ribosomal subunit; part of the 5S rRNA/L5/L18/L25 subcomplex. Contacts the 5S and 23S rRNAs.

Functionally, this is one of the proteins that bind and probably mediate the attachment of the 5S RNA into the large ribosomal subunit, where it forms part of the central protuberance. This chain is Large ribosomal subunit protein uL18, found in Acidiphilium cryptum (strain JF-5).